A 470-amino-acid polypeptide reads, in one-letter code: Cysteine--tRNA ligase (470 aa).

Cys28 lines the Zn(2+) pocket. Positions 30 to 40 (PTVYNYIHIGN) match the 'HIGH' region motif. Residues Cys212, His237, and Glu241 each coordinate Zn(2+). Residues 271–275 (KMSKS) carry the 'KMSKS' region motif. Lys274 is a binding site for ATP.

The protein belongs to the class-I aminoacyl-tRNA synthetase family. As to quaternary structure, monomer. Zn(2+) is required as a cofactor.

The protein resides in the cytoplasm. It catalyses the reaction tRNA(Cys) + L-cysteine + ATP = L-cysteinyl-tRNA(Cys) + AMP + diphosphate. This Limosilactobacillus reuteri (strain DSM 20016) (Lactobacillus reuteri) protein is Cysteine--tRNA ligase.